A 903-amino-acid polypeptide reads, in one-letter code: Protein U7 (903 aa).

Residues 665–685 (KALLTFLTNIVFIVFVVNTLY) traverse the membrane as a helical segment.

It belongs to the herpesviridae US22 family.

It localises to the host membrane. The protein is Protein U7 (U7) of Human herpesvirus 6B (strain Z29) (HHV-6 variant B).